The chain runs to 279 residues: Urease accessory protein UreD (279 aa).

Belongs to the UreD family. UreD, UreF and UreG form a complex that acts as a GTP-hydrolysis-dependent molecular chaperone, activating the urease apoprotein by helping to assemble the nickel containing metallocenter of UreC. The UreE protein probably delivers the nickel.

It is found in the cytoplasm. Its function is as follows. Required for maturation of urease via the functional incorporation of the urease nickel metallocenter. This is Urease accessory protein UreD from Streptococcus salivarius (strain 57.I).